The primary structure comprises 185 residues: Ribosome maturation factor RimM (185 aa).

The PRC barrel domain occupies 108 to 183 (PGEFHVTDLL…RLEIKTIPGL (76 aa)).

Belongs to the RimM family. As to quaternary structure, binds ribosomal protein uS19.

It localises to the cytoplasm. In terms of biological role, an accessory protein needed during the final step in the assembly of 30S ribosomal subunit, possibly for assembly of the head region. Essential for efficient processing of 16S rRNA. May be needed both before and after RbfA during the maturation of 16S rRNA. It has affinity for free ribosomal 30S subunits but not for 70S ribosomes. The chain is Ribosome maturation factor RimM from Synechocystis sp. (strain ATCC 27184 / PCC 6803 / Kazusa).